The sequence spans 149 residues: MHCPFCSATDTKVIDSRLVADGHQVRRRRECTECHERFTTFEGAELVMPRVIKRDGTRQPFDEEKLRGGMLRAVEKRPVSIDEIEQALTKIKSTLRATGEREVNSEMIGNLMMEQLMSLDKVAYIRFASVYRAFEDVSQFGEAIAKLQK.

Residues 3-34 (CPFCSATDTKVIDSRLVADGHQVRRRRECTEC) fold into a zinc finger. The ATP-cone domain maps to 49 to 139 (PRVIKRDGTR…VYRAFEDVSQ (91 aa)).

This sequence belongs to the NrdR family. Zn(2+) serves as cofactor.

Its function is as follows. Negatively regulates transcription of bacterial ribonucleotide reductase nrd genes and operons by binding to NrdR-boxes. This Shewanella frigidimarina (strain NCIMB 400) protein is Transcriptional repressor NrdR.